A 962-amino-acid chain; its full sequence is Protease 3 (962 aa).

Positions 1-23 (MPRSIWFKALLLFVALWAPLSQA) are cleaved as a signal peptide. Residue His88 coordinates Zn(2+). Catalysis depends on Glu91, which acts as the Proton acceptor. Zn(2+)-binding residues include His92 and Glu169.

Belongs to the peptidase M16 family. As to quaternary structure, monomer. Zn(2+) serves as cofactor.

The protein localises to the periplasm. It carries out the reaction Preferential cleavage of 16-Tyr-|-Leu-17 and 25-Phe-|-Tyr-26 bonds of oxidized insulin B chain. Also acts on other substrates of Mw less than 7 kDa such as insulin and glucagon.. Its function is as follows. Endopeptidase that degrades small peptides of less than 7 kDa, such as glucagon and insulin. The protein is Protease 3 (ptrA) of Escherichia coli O6:H1 (strain CFT073 / ATCC 700928 / UPEC).